The chain runs to 144 residues: Galectin a (144 aa).

Residues 1–138 form the Galectin domain; it reads DHIDLEFDVG…DAVLRKLCVV (138 aa).

As to quaternary structure, tetramer.

Lectin that binds beta-galactoside and a wide array of complex carbohydrates. The sequence is that of Galectin a from Aplysina lactuca (Marine sponge).